The primary structure comprises 257 residues: Transmembrane protein C257L (257 aa).

2 consecutive transmembrane segments (helical) span residues 123–143 (LELL…FTAL) and 163–183 (MMIF…YVLV).

Belongs to the asfivirus C257R family.

The protein localises to the host membrane. It localises to the virion. The chain is Transmembrane protein C257L from Ornithodoros (relapsing fever ticks).